Reading from the N-terminus, the 161-residue chain is uncharacterized protein (161 aa).

The helical transmembrane segment at 5-25 threads the bilayer; the sequence is GPTLLSLLAALLVSLGLLLWY.

The protein belongs to the IIV-6 203L/325L family.

The protein localises to the membrane. This is an uncharacterized protein from Invertebrate iridescent virus 3 (IIV-3).